The sequence spans 221 residues: Probable septum site-determining protein MinC (221 aa).

The protein belongs to the MinC family. In terms of assembly, interacts with MinD and FtsZ.

Cell division inhibitor that blocks the formation of polar Z ring septums. Rapidly oscillates between the poles of the cell to destabilize FtsZ filaments that have formed before they mature into polar Z rings. Prevents FtsZ polymerization. The chain is Probable septum site-determining protein MinC from Shewanella loihica (strain ATCC BAA-1088 / PV-4).